Here is a 117-residue protein sequence, read N- to C-terminus: Hemerythrin subunit alpha (117 aa).

His-24, His-53, Glu-57, His-72, His-76, His-105, and Asp-110 together coordinate Fe cation.

Belongs to the hemerythrin family. As to quaternary structure, octamer composed of two types of chains: alpha and beta.

In terms of biological role, hemerythrin is a respiratory protein in blood cells of certain marine worms. The oxygen-binding site in each chain contains two iron atoms. The protein is Hemerythrin subunit alpha of Lingula anatina (Brachiopod).